Consider the following 430-residue polypeptide: Tektin-2 (430 aa).

Coiled coils occupy residues 82-160 (LTDL…QAFE) and 273-379 (EKVY…DIAC).

Belongs to the tektin family. In terms of assembly, microtubule inner protein component of sperm flagellar doublet microtubules. May interact with CCDC172. Post-translationally, tyrosine phosphorylated. Ubiquitinated, leading to its degradation. Deubiquitinated by USP16, promoting its stability.

It is found in the cytoplasm. Its subcellular location is the cytoskeleton. The protein resides in the cilium axoneme. It localises to the flagellum axoneme. The protein localises to the microtubule organizing center. In terms of biological role, microtubule inner protein (MIP) part of the dynein-decorated doublet microtubules (DMTs) in cilia and flagellar axoneme. Plays a key role in the assembly or attachment of the inner dynein arm to microtubules in sperm flagella and tracheal cilia. Forms filamentous polymers in the walls of ciliary and flagellar microtubules. In Macaca fascicularis (Crab-eating macaque), this protein is Tektin-2 (TEKT2).